The chain runs to 880 residues: Zinc-responsive transcriptional regulator ZAP1 (880 aa).

2 disordered regions span residues 1-26 (MDAL…AASA) and 140-164 (NNFH…PRRK). Positions 17-26 (ATSAATAASA) are enriched in low complexity. Residues 147 to 158 (SDPTSPQQNSKS) are compositionally biased toward polar residues. Ser-156 and Ser-166 each carry phosphoserine. A zinc-responsive domain 1 (ZRD(AD1)) region spans residues 182-502 (KPNPPPGSDD…LTNNDLNDLI (321 aa)). The tract at residues 207-402 (HPKSEANIKQ…YEVPFGKHIN (196 aa)) is transcription activation domain 1 (AD1). Disordered regions lie at residues 436–482 (NRCN…VNNS) and 510–555 (RFRN…PSSI). Residues 442–456 (NNLNGSNNNTAGATS) show a composition bias toward low complexity. A compositionally biased stretch (basic residues) spans 460–474 (QHHHHRIQFHSHKPN). Ser-515 carries the post-translational modification Phosphoserine. Over residues 545–555 (SSLEDSLPSSI) the composition is skewed to low complexity. The segment at 579–604 (LKCKWKECPESCSSLFDLQRHLLKDH) adopts a C2H2-type 1 zinc-finger fold. Residues 579-641 (LKCKWKECPE…SIVNHINCQH (63 aa)) are zinc-responsive domain 2 (ZRD(AD2)). Zn(2+) is bound by residues Cys-581, Cys-586, His-599, His-604, Cys-618, Cys-623, His-636, and His-641. Positions 611–640 (HPMEPLACNWEDCDFLGDDTCSIVNHINCQ) are transcription activation domain 2 (AD2). The C2H2-type 2; atypical zinc-finger motif lies at 616–641 (LACNWEDCDFLGDDTCSIVNHINCQH). 5 consecutive C2H2-type zinc fingers follow at residues 705 to 730 (VICQ…EAVH), 738 to 762 (YQCL…LKVH), 768 to 790 (YKCK…TRTH), 796 to 818 (YKCH…IRTH), and 824 to 846 (LQCK…IKTH). A DNA-binding region (DNA-binding domain) is located at residues 705–846 (VICQWDGCNK…SNLSKHIKTH (142 aa)).

It localises to the nucleus. With respect to regulation, active in zinc-limited cells and repressed in replete cells. Zinc controls ZAP1 DNA binding activity. In terms of biological role, transcription regulator controlling zinc-responsive gene expression. Binds to zinc-responsive elements (ZREs) (consensus sequence 5'-ACCYYNAAGGT-3') in the promoter of target genes. Recruits SWI/SNF, SAGA, and Mediator complexes as coactivators in a zinc-responsive manner. Involved in zinc ion homeostasis by zinc-responsive transcriptional regulation of the zinc uptake system genes ZTR1 and ZTR2. Positively regulates ETR1 expression, affecting mitochondrial function. The sequence is that of Zinc-responsive transcriptional regulator ZAP1 (ZAP1) from Saccharomyces cerevisiae (strain ATCC 204508 / S288c) (Baker's yeast).